Here is a 514-residue protein sequence, read N- to C-terminus: Myocyte-specific enhancer factor 2D (514 aa).

In terms of domain architecture, MADS-box spans 3-57; that stretch reads RKKIQIQRITDERNRQVTFTKRKFGLMKKAYELSVLCDCEIALIIFNHSNKLFQY. A DNA-binding region (mef2-type) is located at residues 58-86; sequence ASTDMDKVLLKYTEYNEPHESRTNADIIE. A phosphoserine mark is found at Asp-97, Ser-98, and Ser-106. Leu-107 is modified (phosphothreonine). Phosphoserine is present on Ser-110. Ser-121 is subject to Phosphoserine; by PKA. A disordered region spans residues 174–207; sequence TDPRLLSPQQPALQRNSVSPGLPQRPASAGAMLG. Ser-180 is modified (phosphoserine; by MAPK7). Over residues 180–192 the composition is skewed to polar residues; it reads SPQQPALQRNSVS. Position 190 is a phosphoserine; by PKA (Ser-190). A Phosphoserine modification is found at Ser-231. The interval 244–269 is disordered; sequence NKVIPAKSPPPPTHNTQLGAPSRKPD. An N6-acetyllysine modification is found at Lys-245. Ser-251 carries the post-translational modification Phosphoserine. A beta domain region spans residues 286 to 292; the sequence is TEDHLDL. 2 disordered regions span residues 364–399 and 430–514; these read WQQP…QQPH and SIKS…WTLK. Residues 367–396 are compositionally biased toward pro residues; that stretch reads PQPPQQPQPPQPPQSQPQPPQPQPQQPPQQ. Residue Lys-432 is modified to N6-acetyllysine; alternate. Lys-432 is covalently cross-linked (Glycyl lysine isopeptide (Lys-Gly) (interchain with G-Cter in SUMO); alternate). The residue at position 437 (Ser-437) is a Phosphoserine.

It belongs to the MEF2 family. As to quaternary structure, forms a complex with class II HDACs in undifferentiating cells. On myogenic differentiation, HDACs are released into the cytoplasm allowing MEF2s to interact with other proteins for activation. Interacts with HDAC4 (in undifferentiating cells); the interaction translocates MEF2D to nuclear dots. Forms a heterodimer with MEF2A. Interacts with MAPK7; the interaction phosphorylates but does not activate MEF2D. Interacts with MYOG. Interacts with CCAR2 and HDAC3. Phosphorylated on Ser-437 is which is required for Lys-432 sumoylation and inhibits transcriptional activity. Phosphorylation on this residue by CDK5 is dependent on p35 and calpains. Phosphorylated by PKA at Ser-121 and Ser-190 represses transcriptional activity in embryonic and postnatal skeletal muscle, and stabilizes protein levels. No in vitro phosphorylation by PKA on Thr-20. Phosphorylated and activated by CaMK4. In terms of processing, acetylated on Lys-432 by CREBBP. Acetylated by EP300. Deacetylated by SIRT1 and HDAC3. Post-translationally, sumoylated on Lys-432 with SUMO2 but not SUMO1; which inhibits transcriptional activity and myogenic activity. Desumoylated by SENP3. Proteolytically cleaved in cerebellar granule neurons by caspase 7 following neurotoxicity. Preferentially cleaves the CDK5-mediated hyperphosphorylated form which leads to neuron apoptosis and transcriptional inactivation. Widely expressed though mainly restricted to skeletal and cardiac muscle, brain, neurons and lymphocytes. Differentially expressed depending on if isoforms contain the beta domain or not, with the total expression of the beta domain-lacking isoforms vastly exceeding that of the beta domain-containing isoforms. Isoforms containing the beta domain are expressed primarily in skeletal and cardiac muscle and in brain. Also present in lung and testis. Splicing to include the beta domain is induced in differentiating myocytes. Isoforms lacking the beta domain are expressed less abundantly in skeletal muscle, brain and lymphocytes, and are uniquely found in ovary, liver, spleen and kidney. In embryos, the beta domain-containing and beta domain-lacking isoforms are equally expressed. Also expressed cerebellar granule neurons and other regions of the CNS. Highest levels in the olfactory bulb, cortex, hippocampus, thalamus and cerebellum.

The protein resides in the nucleus. Its function is as follows. Transcriptional activator which binds specifically to the MEF2 element, 5'-YTA[AT](4)TAR-3', found in numerous muscle-specific, growth factor- and stress-induced genes. Mediates cellular functions not only in skeletal and cardiac muscle development, but also in neuronal differentiation and survival. Plays diverse roles in the control of cell growth, survival and apoptosis via p38 MAPK signaling in muscle-specific and/or growth factor-related transcription. Plays a critical role in the regulation of neuronal apoptosis. The sequence is that of Myocyte-specific enhancer factor 2D (Mef2d) from Mus musculus (Mouse).